The chain runs to 27 residues: Putative phosphoglycerate kinase (27 aa).

The protein belongs to the phosphoglycerate kinase family. In terms of assembly, monomer. Mg(2+) is required as a cofactor.

It catalyses the reaction (2R)-3-phosphoglycerate + ATP = (2R)-3-phospho-glyceroyl phosphate + ADP. This chain is Putative phosphoglycerate kinase, found in Pinus strobus (Eastern white pine).